The chain runs to 42 residues: Large ribosomal subunit protein bL36 (42 aa).

The protein belongs to the bacterial ribosomal protein bL36 family.

This Wolbachia pipientis subsp. Culex pipiens (strain wPip) protein is Large ribosomal subunit protein bL36.